The primary structure comprises 983 residues: MMARRTVDFKKLIEQLRARATDKAEALNTVSQLEIGAVDAQDVTASAVRAFVGALPSSGYHFGFVRQNVVFYLLSHATVQTARDPLYAAEQLHEQLDRFLRHQHDGGGDEDRLPFYHNGATLTAFQKLLQTLREIQTVIAEQSGGTAAAADLIASNNASTERRGKKGGSSSGGQQPLVRRVITQLETAATEARPYVNCRAVAELLDLTYQRLIYWACTLMPYVLFRRDTDTELDTVLLMHFFYTHYRSVNGDLAVEFQNYVKNSVRHMSSFVSSDIDGDQKPGAEHMRDVSYKLFVGNLQARDASGLMFPIISTRISTVNLYLSPERMFFHPGLISRLLSEEVSPRANLDAYARVCDRVLEDHLHTPRRVQRLLDLTQMVMRLVELGFNHDTCAAYAQMALIQPASQKSSLFVSEIREKLIQIIYNFYTFFMCLYVYSPTFLFDHRRRLILEQHRSTLIGSKEELQHVWSNVTLNVNTHFAVQYTEEDFEAHTKGATEAEREYLYRDLHSKWGVHLFTLRPSRGAAGAASPLPPLDGVTRSDILRECALVNLNEGRVNYASLLAFSHHPEFPSIFAQLVVVTEFSEIFGIPQGLFQAVGSPRLFALIQLCRVLLPEQVTLYQNLVSIYNLTTFVKHIDAAVFKTVRDCVFDIATTLEHLSGVPVTPNVDLLAELMARSVAHNLYTTVNPLIEDVMRSSAGSLRNYLRHTRLCFGLARGRARLSEDGVTVYVEVQGQYGLRVPTTRFVEQLRELVRRDRLLAENLRGLNERLLSVRVRVRQISSDTEEVSRHAKGHRTVAQMSKALKKTASKIKVLETRVTLALEQAQRSNGAVVTAVQRALAVFDVLSRENLERRGAQLCLTEATSLLHRHRALAPMTWPAGTGVAAAAEADRALREFLEAPWESAPQPPRLRMTPDTDHEESTAGATSVPEVLGARYEPAHLAASDLLNWYIVPVSQAQQDILSSIDPPAGSTSVSLPPASP.

The tract at residues 474 to 983 (LNVNTHFAVQ…TSVSLPPASP (510 aa)) is interaction with large tegument protein. The interval 901-932 (APWESAPQPPRLRMTPDTDHEESTAGATSVPE) is disordered. Basic and acidic residues predominate over residues 914–923 (MTPDTDHEES).

This sequence belongs to the herpesviridae inner tegument protein family. Interacts (via C-terminus) with the large tegument protein/LTP (via N-terminus).

Its subcellular location is the virion tegument. The protein resides in the host cytoplasm. It localises to the host nucleus. It is found in the host Golgi apparatus. The protein localises to the host trans-Golgi network. In terms of biological role, plays an essential role in cytoplasmic secondary envelopment during viral egress. Interacts with the capsid via the large tegument protein/LTP and participates in its transport to the host trans-Golgi network (TGN) where secondary envelopment occurs. Modulates tegumentation and capsid accumulation at the viral assembly complex. The protein is Inner tegument protein (UL47) of Homo sapiens (Human).